Consider the following 255-residue polypeptide: tRNA (guanine-N(7)-)-methyltransferase (255 aa).

The interval 1 to 31 is disordered; it reads MMHDDPNEAGLPPHNDAIPDETAEGADEVNP. Residues 18–27 are compositionally biased toward acidic residues; the sequence is IPDETAEGAD. S-adenosyl-L-methionine-binding residues include glutamate 86, glutamate 111, aspartate 138, and aspartate 161. The active site involves aspartate 161. Substrate contacts are provided by residues lysine 165, aspartate 197, and 232 to 235; that span reads TKFE.

Belongs to the class I-like SAM-binding methyltransferase superfamily. TrmB family.

The catalysed reaction is guanosine(46) in tRNA + S-adenosyl-L-methionine = N(7)-methylguanosine(46) in tRNA + S-adenosyl-L-homocysteine. The protein operates within tRNA modification; N(7)-methylguanine-tRNA biosynthesis. Catalyzes the formation of N(7)-methylguanine at position 46 (m7G46) in tRNA. The chain is tRNA (guanine-N(7)-)-methyltransferase from Burkholderia cenocepacia (strain HI2424).